The primary structure comprises 358 residues: Probable butyrate kinase (358 aa).

This sequence belongs to the acetokinase family.

The protein resides in the cytoplasm. It catalyses the reaction butanoate + ATP = butanoyl phosphate + ADP. The chain is Probable butyrate kinase from Oceanobacillus iheyensis (strain DSM 14371 / CIP 107618 / JCM 11309 / KCTC 3954 / HTE831).